Reading from the N-terminus, the 1597-residue chain is Mitogen-activated protein kinase kinase kinase 4 (1597 aa).

2 disordered regions span residues 1-128 and 424-465; these read MRDA…VETV and SPRP…PRVP. A compositionally biased stretch (acidic residues) spans 59–69; that stretch reads SDPEDFSDETN. Residue serine 77 is modified to Phosphoserine. Positions 84 to 94 are enriched in basic residues; it reads QMKRLSAKHQR. The residue at position 424 (serine 424) is a Phosphoserine. Threonine 440 carries the post-translational modification Phosphothreonine. Phosphoserine is present on serine 449. A compositionally biased stretch (acidic residues) spans 449-458; sequence SGTEESDEEP. Threonine 451 carries the post-translational modification Phosphothreonine. Serine 454 and serine 492 each carry phosphoserine. Disordered regions lie at residues 1137–1157, 1190–1220, and 1233–1263; these read RPVKVPRCHSDPPNPHLIIPT, AAGRPGPGGGDSVPAKPVNTAPDTRGSSVPE, and FRSLSRHSSPTEERDEPAYPRSDSSGSTRRS. Polar residues predominate over residues 1210 to 1219; that stretch reads APDTRGSSVP. Phosphoserine is present on residues serine 1241 and serine 1263. Over residues 1241-1250 the composition is skewed to basic and acidic residues; sequence SPTEERDEPA. Residues 1332-1590 enclose the Protein kinase domain; sequence WQRGNKIGEG…ASQLLDHAFV (259 aa). ATP is bound by residues 1338-1346 and lysine 1361; that span reads IGEGQYGKV. The active-site Proton acceptor is the aspartate 1452.

Belongs to the protein kinase superfamily. STE Ser/Thr protein kinase family. MAP kinase kinase kinase subfamily. In terms of assembly, monomer and homodimer. Homodimerization enhances kinase activity. Interacts with CDC42. Interacts with TRAF4; this promotes homodimerization. Binds both upstream activators and downstream substrates in multimolecular complexes. Interacts with AXIN1 and DIXDC1; interaction with DIXDC1 prevents interaction with AXIN1. Interacts with GADD45 and MAP2K6. Interacts with ZFP36; this interaction enhances the association with SH3KBP1/CIN85. Interacts with SH3KBP1; this interaction enhances the association with ZFP36. Requires Mg(2+) as cofactor. In terms of tissue distribution, widely expressed. High expression was found in skeletal muscle, kidney, testis followed by heart brain and lung. Low expression was found in spleen.

The protein localises to the cytoplasm. It localises to the perinuclear region. The enzyme catalyses L-seryl-[protein] + ATP = O-phospho-L-seryl-[protein] + ADP + H(+). It catalyses the reaction L-threonyl-[protein] + ATP = O-phospho-L-threonyl-[protein] + ADP + H(+). Its activity is regulated as follows. N-terminal autoinhibitory domain interacts with the C-terminal kinase domain, inhibiting kinase activity, and preventing interaction with its substrate, MAP2K6. The GADD45 proteins activate the kinase by binding to the N-terminal domain. Activated by phosphorylation on Thr-1494. Functionally, component of a protein kinase signal transduction cascade. Activates the CSBP2, P38 and JNK MAPK pathways, but not the ERK pathway. Specifically phosphorylates and activates MAP2K4 and MAP2K6. The chain is Mitogen-activated protein kinase kinase kinase 4 (Map3k4) from Mus musculus (Mouse).